The primary structure comprises 509 residues: ATP synthase subunit alpha, mitochondrial (509 aa).

171–178 (GDRQTGKT) serves as a coordination point for ATP.

Belongs to the ATPase alpha/beta chains family. F-type ATPases have 2 components, CF(1) - the catalytic core - and CF(0) - the membrane proton channel. CF(1) has five subunits: alpha(3), beta(3), gamma(1), delta(1), epsilon(1). CF(0) has three main subunits: a, b and c.

It is found in the mitochondrion. The protein localises to the mitochondrion inner membrane. In terms of biological role, mitochondrial membrane ATP synthase (F(1)F(0) ATP synthase or Complex V) produces ATP from ADP in the presence of a proton gradient across the membrane which is generated by electron transport complexes of the respiratory chain. F-type ATPases consist of two structural domains, F(1) - containing the extramembraneous catalytic core, and F(0) - containing the membrane proton channel, linked together by a central stalk and a peripheral stalk. During catalysis, ATP synthesis in the catalytic domain of F(1) is coupled via a rotary mechanism of the central stalk subunits to proton translocation. Subunits alpha and beta form the catalytic core in F(1). Rotation of the central stalk against the surrounding alpha(3)beta(3) subunits leads to hydrolysis of ATP in three separate catalytic sites on the beta subunits. Subunit alpha does not bear the catalytic high-affinity ATP-binding sites. This chain is ATP synthase subunit alpha, mitochondrial (ATPA), found in Oryza sativa subsp. indica (Rice).